The following is a 121-amino-acid chain: Large ribosomal subunit protein bL12 (121 aa).

This sequence belongs to the bacterial ribosomal protein bL12 family. As to quaternary structure, homodimer. Part of the ribosomal stalk of the 50S ribosomal subunit. Forms a multimeric L10(L12)X complex, where L10 forms an elongated spine to which 2 to 4 L12 dimers bind in a sequential fashion. Binds GTP-bound translation factors.

Functionally, forms part of the ribosomal stalk which helps the ribosome interact with GTP-bound translation factors. Is thus essential for accurate translation. This is Large ribosomal subunit protein bL12 from Clostridioides difficile (strain 630) (Peptoclostridium difficile).